A 367-amino-acid chain; its full sequence is Glutamate 5-kinase (367 aa).

Lys-17 serves as a coordination point for ATP. Ser-57, Asp-144, and Asn-156 together coordinate substrate. Residues 176 to 177 (SD) and 217 to 223 (TGGMVSK) contribute to the ATP site. In terms of domain architecture, PUA spans 279–357 (VGSLTLDEGA…SELPCELRRP (79 aa)).

Belongs to the glutamate 5-kinase family.

The protein localises to the cytoplasm. The enzyme catalyses L-glutamate + ATP = L-glutamyl 5-phosphate + ADP. The protein operates within amino-acid biosynthesis; L-proline biosynthesis; L-glutamate 5-semialdehyde from L-glutamate: step 1/2. Functionally, catalyzes the transfer of a phosphate group to glutamate to form L-glutamate 5-phosphate. The sequence is that of Glutamate 5-kinase from Mycobacterium leprae (strain Br4923).